We begin with the raw amino-acid sequence, 315 residues long: Methionyl-tRNA formyltransferase (315 aa).

114-117 lines the (6S)-5,6,7,8-tetrahydrofolate pocket; sequence SLLP.

Belongs to the Fmt family.

It carries out the reaction L-methionyl-tRNA(fMet) + (6R)-10-formyltetrahydrofolate = N-formyl-L-methionyl-tRNA(fMet) + (6S)-5,6,7,8-tetrahydrofolate + H(+). Functionally, attaches a formyl group to the free amino group of methionyl-tRNA(fMet). The formyl group appears to play a dual role in the initiator identity of N-formylmethionyl-tRNA by promoting its recognition by IF2 and preventing the misappropriation of this tRNA by the elongation apparatus. This Corynebacterium efficiens (strain DSM 44549 / YS-314 / AJ 12310 / JCM 11189 / NBRC 100395) protein is Methionyl-tRNA formyltransferase.